A 60-amino-acid polypeptide reads, in one-letter code: Large ribosomal subunit protein bL32 (60 aa).

The tract at residues Met1–Thr36 is disordered. Over residues Ser9–His19 the composition is skewed to basic residues.

It belongs to the bacterial ribosomal protein bL32 family.

The sequence is that of Large ribosomal subunit protein bL32 from Methylibium petroleiphilum (strain ATCC BAA-1232 / LMG 22953 / PM1).